A 275-amino-acid chain; its full sequence is NAD kinase (275 aa).

The Proton acceptor role is filled by aspartate 53. NAD(+)-binding positions include 53 to 54, 129 to 130, arginine 155, aspartate 157, and 168 to 173; these read DG, NE, and TAYNKS.

The protein belongs to the NAD kinase family. A divalent metal cation is required as a cofactor.

The protein localises to the cytoplasm. It carries out the reaction NAD(+) + ATP = ADP + NADP(+) + H(+). In terms of biological role, involved in the regulation of the intracellular balance of NAD and NADP, and is a key enzyme in the biosynthesis of NADP. Catalyzes specifically the phosphorylation on 2'-hydroxyl of the adenosine moiety of NAD to yield NADP. In Streptococcus agalactiae serotype Ia (strain ATCC 27591 / A909 / CDC SS700), this protein is NAD kinase.